A 528-amino-acid polypeptide reads, in one-letter code: Intestinal-type alkaline phosphatase (528 aa).

The first 19 residues, 1–19, serve as a signal peptide directing secretion; sequence MQGPWVLLLLGLRLQLSLG. A Mg(2+)-binding site is contributed by Asp61. Zn(2+) contacts are provided by Asp61 and Ser111. Ser111 functions as the Phosphoserine intermediate in the catalytic mechanism. Residues Cys140 and Cys202 are joined by a disulfide bond. Residue Asn141 is glycosylated (N-linked (GlcNAc...) asparagine). Ser174 contacts Mg(2+). Glu235 is a binding site for Ca(2+). The N-linked (GlcNAc...) asparagine glycan is linked to Asn268. Ca(2+) is bound by residues Phe288, Glu289, and Asp304. Residue Glu330 coordinates Mg(2+). 4 residues coordinate Zn(2+): Asp335, His339, Asp376, and His377. Asn429 carries N-linked (GlcNAc...) asparagine glycosylation. His451 contacts Zn(2+). Cys486 and Cys493 are oxidised to a cystine. The GPI-anchor amidated aspartate moiety is linked to residue Asp503. A propeptide spans 504-528 (removed in mature form); it reads AAHPVAASLPLLAGTLLLLGASAAP.

This sequence belongs to the alkaline phosphatase family. Homodimer. Mg(2+) serves as cofactor. The cofactor is Zn(2+). It depends on Ca(2+) as a cofactor.

The protein resides in the cell membrane. The catalysed reaction is a phosphate monoester + H2O = an alcohol + phosphate. In terms of biological role, alkaline phosphatase that can hydrolyze various phosphate compounds. This is Intestinal-type alkaline phosphatase (ALPI) from Homo sapiens (Human).